We begin with the raw amino-acid sequence, 139 residues long: MVQLSTYLPSPPSTNMSCTFSSVMSVCFMTMSATVLPICGKAVTSHLRSNSCLTRVSSFLNTSRPQLATFPDSRASSSTSSSMHVPLPTLTILTPSLHQAKLLRLIILFVEAVLGKAKMIKSAFFQVFGSSRSEWYLAL.

A helical membrane pass occupies residues 22–38; the sequence is SVMSVCFMTMSATVLPI.

The protein resides in the membrane. This is an uncharacterized protein from Saccharomyces cerevisiae (strain ATCC 204508 / S288c) (Baker's yeast).